The sequence spans 77 residues: Putative defensin-like protein 60 (77 aa).

The first 25 residues, 1-25 (MKMNITKSYVILFLVVVMTNSLSNS), serve as a signal peptide directing secretion. Cystine bridges form between C41–C75, C45–C68, C54–C73, and C58–C74.

This sequence belongs to the DEFL family.

The protein localises to the secreted. This is Putative defensin-like protein 60 from Arabidopsis thaliana (Mouse-ear cress).